The following is a 209-amino-acid chain: Chaperone protein TorD (209 aa).

It belongs to the TorD/DmsD family. TorD subfamily.

It localises to the cytoplasm. Functionally, involved in the biogenesis of TorA. Acts on TorA before the insertion of the molybdenum cofactor and, as a result, probably favors a conformation of the apoenzyme that is competent for acquiring the cofactor. In Shewanella massilia, this protein is Chaperone protein TorD.